The following is a 241-amino-acid chain: Polyol phosphate phosphatase PYP1 (241 aa).

Residue Asp-9 is the Nucleophile of the active site. Mg(2+) is bound by residues Asp-9, Asp-11, and Asp-179. The active-site Proton donor is the Asp-11.

Belongs to the HAD-like hydrolase superfamily. Mg(2+) serves as cofactor.

It is found in the cytoplasm. The protein resides in the nucleus. It catalyses the reaction D-ribitol 5-phosphate + H2O = ribitol + phosphate. The enzyme catalyses D-sorbitol 6-phosphate + H2O = D-sorbitol + phosphate. The catalysed reaction is sn-glycerol 1-phosphate + H2O = glycerol + phosphate. It carries out the reaction D-erythrose 4-phosphate + H2O = D-erythrose + phosphate. In terms of biological role, hydrolyzes sugar alcohol (polyol) phosphates. Dephosphorylates a variety of substrates, including: sn-glycerol 1-phosphate (D-glycerol 3-phosphate), D-ribitol 5-phosphate, D-sorbitol 6-phosphate (D-glucitol 6-phosphate), and D-erythrose 4-phosphate. Prevents accumulation of toxic levels of polyol phosphates, which can impair glycolysis by inhibiting glucose-6-phosphate isomerase. The polypeptide is Polyol phosphate phosphatase PYP1 (Saccharomyces cerevisiae (strain ATCC 204508 / S288c) (Baker's yeast)).